A 723-amino-acid polypeptide reads, in one-letter code: Tripartite motif-containing protein 42 (723 aa).

The RING-type zinc finger occupies 146–192 (CPMCSRLRLHSFMLPCNHSLCEKCLRQLQKHAEVTENFFILICPVCD). B box-type zinc fingers lie at residues 235–280 (PILC…FVDT) and 285–326 (QDEK…TISL). Residues C290, H293, C313, and H318 each contribute to the Zn(2+) site. Residues 382–407 (KLRSILQEKEKIIMEQIENLEVSRQK) adopt a coiled-coil conformation. Positions 434–492 (LKETGQVAFLQSAKILVDQIEDGIQTTYRPDPQLRLHSINYVPLDFVELSSAIHELFPT) constitute a COS domain. Positions 603 to 701 (TPGPIVIYQT…DICKVVTPDG (99 aa)) constitute a Fibronectin type-III domain.

This sequence belongs to the TRIM/RBCC family.

This chain is Tripartite motif-containing protein 42 (TRIM42), found in Homo sapiens (Human).